Consider the following 309-residue polypeptide: 2-phospho-L-lactate transferase (309 aa).

2 residues coordinate 7,8-didemethyl-8-hydroxy-5-deazariboflavin: Asp50 and Lys89.

It belongs to the CofD family. As to quaternary structure, homodimer. Requires Mg(2+) as cofactor.

It carries out the reaction (2S)-lactyl-2-diphospho-5'-guanosine + 7,8-didemethyl-8-hydroxy-5-deazariboflavin = oxidized coenzyme F420-0 + GMP + H(+). It functions in the pathway cofactor biosynthesis; coenzyme F420 biosynthesis. Functionally, catalyzes the transfer of the 2-phospholactate moiety from (2S)-lactyl-2-diphospho-5'-guanosine to 7,8-didemethyl-8-hydroxy-5-deazariboflavin (FO) with the formation of oxidized coenzyme F420-0 and GMP. The chain is 2-phospho-L-lactate transferase from Methanococcus maripaludis (strain C6 / ATCC BAA-1332).